A 250-amino-acid polypeptide reads, in one-letter code: Octanoyltransferase (250 aa).

The region spanning 49-230 (DEINDVILVL…ALDDAFAGRL (182 aa)) is the BPL/LPL catalytic domain. Substrate is bound by residues 87–94 (RGGRITWH), 160–162 (ALG), and 173–175 (GLA). Catalysis depends on Cys191, which acts as the Acyl-thioester intermediate.

Belongs to the LipB family.

The protein resides in the cytoplasm. It carries out the reaction octanoyl-[ACP] + L-lysyl-[protein] = N(6)-octanoyl-L-lysyl-[protein] + holo-[ACP] + H(+). It functions in the pathway protein modification; protein lipoylation via endogenous pathway; protein N(6)-(lipoyl)lysine from octanoyl-[acyl-carrier-protein]: step 1/2. Functionally, catalyzes the transfer of endogenously produced octanoic acid from octanoyl-acyl-carrier-protein onto the lipoyl domains of lipoate-dependent enzymes. Lipoyl-ACP can also act as a substrate although octanoyl-ACP is likely to be the physiological substrate. The polypeptide is Octanoyltransferase (Corynebacterium diphtheriae (strain ATCC 700971 / NCTC 13129 / Biotype gravis)).